The following is a 144-amino-acid chain: Large ribosomal subunit protein uL16 (144 aa).

This sequence belongs to the universal ribosomal protein uL16 family. In terms of assembly, part of the 50S ribosomal subunit.

Functionally, binds 23S rRNA and is also seen to make contacts with the A and possibly P site tRNAs. The protein is Large ribosomal subunit protein uL16 of Thermoanaerobacter sp. (strain X514).